Reading from the N-terminus, the 746-residue chain is Exostosin-1 (746 aa).

The Cytoplasmic segment spans residues 1 to 5 (MQAKK). Residues 6–26 (RYFILLSAGSCLALLFYFGGV) traverse the membrane as a helical; Signal-anchor for type II membrane protein segment. Residues 27 to 746 (QFRASRSHSR…RKKYRDIERL (720 aa)) are Lumenal-facing. The N-linked (GlcNAc...) asparagine glycan is linked to N89. 2 disulfides stabilise this stretch: C98/C103 and C109/C152. A protein contacts are provided by L166 and Y203. UDP-binding residues include K267, K269, Y271, and R280. C298 and C312 are joined by a disulfide. H300 provides a ligand contact to a protein. UDP-binding residues include Y319 and Y324. Residue N330 is glycosylated (N-linked (GlcNAc...) asparagine). Intrachain disulfides connect C334/C355 and C652/C704. UDP contacts are provided by R346 and E349.

Belongs to the glycosyltransferase 47 family. As to quaternary structure, part of the heparan sulfate polymerase, a dimeric complex composed of EXT1 and EXT2. Could also form homooligomeric complexes. Interacts with NDST1. N-glycosylated.

It is found in the golgi apparatus membrane. Its subcellular location is the golgi apparatus. The protein localises to the cis-Golgi network membrane. The protein resides in the endoplasmic reticulum membrane. The catalysed reaction is 3-O-{alpha-D-GlcNAc-[(1-&gt;4)-beta-D-GlcA-(1-&gt;4)-alpha-D-GlcNAc](n)-(1-&gt;4)-beta-D-GlcA-(1-&gt;3)-beta-D-Gal-(1-&gt;3)-beta-D-Gal-(1-&gt;4)-beta-D-Xyl}-L-seryl-[protein] + UDP-alpha-D-glucuronate = 3-O-{[(1-&gt;4)-beta-D-GlcA-(1-&gt;4)-alpha-D-GlcNAc](n+1)-(1-&gt;4)-beta-D-GlcA-(1-&gt;3)-beta-D-Gal-(1-&gt;3)-beta-D-Gal-(1-&gt;4)-beta-D-Xyl}-L-seryl-[protein] + UDP + H(+). It functions in the pathway protein modification; protein glycosylation. Glycosyltransferase forming with EXT2 the heterodimeric heparan sulfate polymerase which catalyzes the elongation of the heparan sulfate glycan backbone. Glycan backbone extension consists in the alternating transfer of (1-&gt;4)-beta-D-GlcA and (1-&gt;4)-alpha-D-GlcNAc residues from their respective UDP-sugar donors. Both EXT1 and EXT2 are required for the full activity of the polymerase since EXT1 bears the N-acetylglucosaminyl-proteoglycan 4-beta-glucuronosyltransferase activity within the complex while EXT2 carries the glucuronosyl-N-acetylglucosaminyl-proteoglycan 4-alpha-N-acetylglucosaminyltransferase activity. Heparan sulfate proteoglycans are ubiquitous components of the extracellular matrix and play an important role in tissue homeostasis and signaling. This Cricetulus griseus (Chinese hamster) protein is Exostosin-1.